Reading from the N-terminus, the 721-residue chain is Procollagen-lysine,2-oxoglutarate 5-dioxygenase (721 aa).

A signal peptide spans methionine 1 to alanine 21. 3 N-linked (GlcNAc...) asparagine glycosylation sites follow: asparagine 504, asparagine 530, and asparagine 536. The Fe2OG dioxygenase domain maps to asparagine 627–proline 721. The Fe cation site is built by histidine 650 and aspartate 652. Asparagine 680 is a glycosylation site (N-linked (GlcNAc...) asparagine). Residue histidine 702 coordinates Fe cation. Residue asparagine 709 is glycosylated (N-linked (GlcNAc...) asparagine). Arginine 712 contacts 2-oxoglutarate.

The cofactor is L-ascorbate. Requires Fe(2+) as cofactor.

It localises to the endoplasmic reticulum. The protein localises to the secreted. It is found in the extracellular space. It catalyses the reaction L-lysyl-[collagen] + 2-oxoglutarate + O2 = (5R)-5-hydroxy-L-lysyl-[collagen] + succinate + CO2. Forms hydroxylysine residues in collagen type IV. Required for the secretion of collagen type IV (vkg) from haemocytes, fat body and follicle cells. This is Procollagen-lysine,2-oxoglutarate 5-dioxygenase from Drosophila melanogaster (Fruit fly).